The chain runs to 236 residues: Small ribosomal subunit protein uS2c (236 aa).

Belongs to the universal ribosomal protein uS2 family.

The protein localises to the plastid. It localises to the chloroplast. In Crucihimalaya wallichii (Rock-cress), this protein is Small ribosomal subunit protein uS2c (rps2).